Reading from the N-terminus, the 352-residue chain is Molybdenum import ATP-binding protein ModC (352 aa).

Positions 1-229 (MLELNFSQTL…SVMHPWLPKE (229 aa)) constitute an ABC transporter domain. ATP is bound at residue 31–38 (GVSGAGKT). The Mop domain maps to 289–352 (QTSIRNVLRA…AQVKSVSITA (64 aa)).

This sequence belongs to the ABC transporter superfamily. Molybdate importer (TC 3.A.1.8) family. As to quaternary structure, the complex is composed of two ATP-binding proteins (ModC), two transmembrane proteins (ModB) and a solute-binding protein (ModA).

Its subcellular location is the cell inner membrane. The enzyme catalyses molybdate(out) + ATP + H2O = molybdate(in) + ADP + phosphate + H(+). Its function is as follows. Part of the ABC transporter complex ModABC involved in molybdenum import. Responsible for energy coupling to the transport system. The chain is Molybdenum import ATP-binding protein ModC from Salmonella typhi.